The chain runs to 82 residues: LPLSYGVVCVLGLCLNVVALYIFLCRLKTWNASTTYMFHLAVSDSLYAASLPLLVYYYAQGDHWPFSTVLCKLVRFLFYTNL.

The helical transmembrane segment at 1–25 (LPLSYGVVCVLGLCLNVVALYIFLC) threads the bilayer. Over 26–35 (RLKTWNASTT) the chain is Cytoplasmic. Residues 36 to 56 (YMFHLAVSDSLYAASLPLLVY) traverse the membrane as a helical segment. At 57 to 75 (YYAQGDHWPFSTVLCKLVR) the chain is on the extracellular side. Residues 76–82 (FLFYTNL) traverse the membrane as a helical segment.

Belongs to the G-protein coupled receptor 1 family. Expressed in brain, heart, stria vascularis and vestibular labyrinth.

It is found in the cell membrane. In terms of biological role, receptor for ATP and UTP coupled to G-proteins that activate a phosphatidylinositol-calcium second messenger system. Not activated by UDP. The polypeptide is P2Y purinoceptor 2 (P2RY2) (Meriones unguiculatus (Mongolian jird)).